The chain runs to 253 residues: Ribosomal RNA small subunit methyltransferase A (253 aa).

The S-adenosyl-L-methionine site is built by H12, L14, G39, E60, D81, and N104.

Belongs to the class I-like SAM-binding methyltransferase superfamily. rRNA adenine N(6)-methyltransferase family. RsmA subfamily.

The protein localises to the cytoplasm. The catalysed reaction is adenosine(1518)/adenosine(1519) in 16S rRNA + 4 S-adenosyl-L-methionine = N(6)-dimethyladenosine(1518)/N(6)-dimethyladenosine(1519) in 16S rRNA + 4 S-adenosyl-L-homocysteine + 4 H(+). Specifically dimethylates two adjacent adenosines (A1518 and A1519) in the loop of a conserved hairpin near the 3'-end of 16S rRNA in the 30S particle. May play a critical role in biogenesis of 30S subunits. This chain is Ribosomal RNA small subunit methyltransferase A, found in Acidovorax ebreus (strain TPSY) (Diaphorobacter sp. (strain TPSY)).